The chain runs to 502 residues: Cysteine protease RavZ (502 aa).

2 short sequence motifs (LIR) span residues 9–23 (DKLI…GEQE) and 23–37 (ESDI…GDEK). Residues 49-325 (SIYPPETSWE…ESALTEGKTL (277 aa)) are catalytic region. Active-site residues include His176 and Asp197. An alpha-3 helix region spans residues 211-217 (YFKGKYR). Cys258 is a catalytic residue. Positions 326–431 (PVQLSEFIVA…VLPCVKFDDT (106 aa)) are membrane targeting region. An LIR 3 motif is present at residues 429 to 443 (DDTIDDFVTIEKDEL).

It localises to the secreted. The protein localises to the host cytoplasmic vesicle membrane. The enzyme catalyses [protein]-C-terminal L-amino acid-glycyl-phosphatidylethanolamide + H2O = a 1,2-diacyl-sn-glycero-3-phosphoethanolamine-N-glycine + [protein]-C-terminal &lt;stereo&gt;L-&lt;/stereo&gt;amino acid. The catalysed reaction is [protein]-C-terminal L-amino acid-glycyl-phosphatidylserine + H2O = 1,2-diacyl-sn-glycero-3-phospho-L-serine-N-glycine + [protein]-C-terminal &lt;stereo&gt;L-&lt;/stereo&gt;amino acid. In terms of biological role, cysteine protease effector that inhibits host cell autophagy by targeting lipid-conjugated ATG8 family proteins on pre-autophagosomal structures. Specifically hydrolyzes the amide bond between the C-terminal glycine residue and an adjacent aromatic residue in ATG8 proteins conjugated to phosphatidylethanolamine (PE), producing an ATG8 protein that cannot be reconjugated by host ATG7 and ATG3. Mechanistically, Ravz interacts with ATG8 proteins conjugated to PE via its LIR motifs, extracts them from the membrane of autophagosomes and integrates the PE part into its own lipid-binding site. It then removes the lipid component of the ATG8 protein. Also able to mediate delipidation of ATG8 proteins conjugated to phosphatidylserine (PS) during non-canonical autophagy. Inhibits host ubiquitin recruitment to bacteria-containing vacuoles, suggesting that it is able to mediate delipidation of other proteins in addition to ATG8 proteins. It is however not involved in the exclusion of autophagy adapters from bacteria-containing vacuoles decorated with ubiquitin. The chain is Cysteine protease RavZ from Legionella pneumophila subsp. pneumophila (strain Philadelphia 1 / ATCC 33152 / DSM 7513).